The primary structure comprises 64 residues: Large ribosomal subunit protein bL35 (64 aa).

A disordered region spans residues Met1–His31.

The protein belongs to the bacterial ribosomal protein bL35 family.

This Paenarthrobacter aurescens (strain TC1) protein is Large ribosomal subunit protein bL35.